The chain runs to 457 residues: tRNA-2-methylthio-N(6)-dimethylallyladenosine synthase (457 aa).

Residues 3–120 (KKVYIKTFGC…LPQMIDQRRA (118 aa)) form the MTTase N-terminal domain. [4Fe-4S] cluster-binding residues include Cys12, Cys49, Cys83, Cys157, Cys161, and Cys164. The region spanning 143–377 (RVEGPSAFVS…QATIEENVAR (235 aa)) is the Radical SAM core domain. Residues 380-447 (RSMVGKVERI…PHSLRGELLL (68 aa)) enclose the TRAM domain.

The protein belongs to the methylthiotransferase family. MiaB subfamily. As to quaternary structure, monomer. Requires [4Fe-4S] cluster as cofactor.

The protein resides in the cytoplasm. It catalyses the reaction N(6)-dimethylallyladenosine(37) in tRNA + (sulfur carrier)-SH + AH2 + 2 S-adenosyl-L-methionine = 2-methylsulfanyl-N(6)-dimethylallyladenosine(37) in tRNA + (sulfur carrier)-H + 5'-deoxyadenosine + L-methionine + A + S-adenosyl-L-homocysteine + 2 H(+). Its function is as follows. Catalyzes the methylthiolation of N6-(dimethylallyl)adenosine (i(6)A), leading to the formation of 2-methylthio-N6-(dimethylallyl)adenosine (ms(2)i(6)A) at position 37 in tRNAs that read codons beginning with uridine. The sequence is that of tRNA-2-methylthio-N(6)-dimethylallyladenosine synthase from Burkholderia ambifaria (strain MC40-6).